The primary structure comprises 435 residues: Serine--tRNA ligase (435 aa).

237-239 (TAE) lines the L-serine pocket. Residue 268–270 (RSE) participates in ATP binding. Residue E291 participates in L-serine binding. 355 to 358 (EISS) lines the ATP pocket. S390 is an L-serine binding site.

The protein belongs to the class-II aminoacyl-tRNA synthetase family. Type-1 seryl-tRNA synthetase subfamily. Homodimer. The tRNA molecule binds across the dimer.

Its subcellular location is the cytoplasm. The catalysed reaction is tRNA(Ser) + L-serine + ATP = L-seryl-tRNA(Ser) + AMP + diphosphate + H(+). It carries out the reaction tRNA(Sec) + L-serine + ATP = L-seryl-tRNA(Sec) + AMP + diphosphate + H(+). It functions in the pathway aminoacyl-tRNA biosynthesis; selenocysteinyl-tRNA(Sec) biosynthesis; L-seryl-tRNA(Sec) from L-serine and tRNA(Sec): step 1/1. Its function is as follows. Catalyzes the attachment of serine to tRNA(Ser). Is also able to aminoacylate tRNA(Sec) with serine, to form the misacylated tRNA L-seryl-tRNA(Sec), which will be further converted into selenocysteinyl-tRNA(Sec). The chain is Serine--tRNA ligase from Lactobacillus delbrueckii subsp. bulgaricus (strain ATCC BAA-365 / Lb-18).